The primary structure comprises 398 residues: Succinate--CoA ligase [ADP-forming] subunit beta (398 aa).

Residues 9–254 (KRLLHEYGAP…LSEEDPKEIE (246 aa)) enclose the ATP-grasp domain. Residues lysine 46, 53–55 (GRG), glutamate 109, alanine 112, and glutamate 117 contribute to the ATP site. The Mg(2+) site is built by asparagine 209 and aspartate 223. Residues asparagine 274 and 331 to 333 (GIM) contribute to the substrate site.

Belongs to the succinate/malate CoA ligase beta subunit family. Heterotetramer of two alpha and two beta subunits. Requires Mg(2+) as cofactor.

The catalysed reaction is succinate + ATP + CoA = succinyl-CoA + ADP + phosphate. It carries out the reaction GTP + succinate + CoA = succinyl-CoA + GDP + phosphate. The protein operates within carbohydrate metabolism; tricarboxylic acid cycle; succinate from succinyl-CoA (ligase route): step 1/1. Its function is as follows. Succinyl-CoA synthetase functions in the citric acid cycle (TCA), coupling the hydrolysis of succinyl-CoA to the synthesis of either ATP or GTP and thus represents the only step of substrate-level phosphorylation in the TCA. The beta subunit provides nucleotide specificity of the enzyme and binds the substrate succinate, while the binding sites for coenzyme A and phosphate are found in the alpha subunit. This is Succinate--CoA ligase [ADP-forming] subunit beta from Bartonella tribocorum (strain CIP 105476 / IBS 506).